Consider the following 72-residue polypeptide: SPbeta prophage-derived uncharacterized protein YorV (72 aa).

This is SPbeta prophage-derived uncharacterized protein YorV (yorV) from Bacillus subtilis (strain 168).